The primary structure comprises 462 residues: A-type ATP synthase subunit B (462 aa).

It belongs to the ATPase alpha/beta chains family. As to quaternary structure, has multiple subunits with at least A(3), B(3), C, D, E, F, H, I and proteolipid K(x).

Its subcellular location is the cell membrane. Functionally, component of the A-type ATP synthase that produces ATP from ADP in the presence of a proton gradient across the membrane. The B chain is a regulatory subunit. The sequence is that of A-type ATP synthase subunit B from Methanococcus maripaludis (strain C5 / ATCC BAA-1333).